Reading from the N-terminus, the 323-residue chain is Dihydrodiol dehydrogenase 3 (323 aa).

NADP(+) contacts are provided by residues 20–24 and D50; that span reads GFGTF. Residue Y55 is the Proton donor of the active site. Residue H117 participates in substrate binding. NADP(+)-binding positions include 166–167, Q190, 216–221, and 270–280; these read SN, YGALGS, and KSYNKKRIKEN.

It belongs to the aldo/keto reductase family.

Its subcellular location is the cytoplasm. The polypeptide is Dihydrodiol dehydrogenase 3 (Bos taurus (Bovine)).